Consider the following 120-residue polypeptide: Small cysteine and glycine repeat-containing protein 2 (120 aa).

Residues 4–104 form a 19 X 2 AA repeats of CG region; that stretch reads CGCGGCGGCG…TCHSCGCGCG (101 aa).

This sequence belongs to the KRTAP type 28 family.

Functionally, in the hair cortex, hair keratin intermediate filaments are embedded in an interfilamentous matrix, consisting of hair keratin-associated proteins (KRTAP), which are essential for the formation of a rigid and resistant hair shaft through their extensive disulfide bond cross-linking with abundant cysteine residues of hair keratins. The matrix proteins include the high-sulfur and high-glycine-tyrosine keratins. In Homo sapiens (Human), this protein is Small cysteine and glycine repeat-containing protein 2.